The sequence spans 609 residues: Proteasome-associated ATPase (609 aa).

Residues 1–24 (MADSERSEAFGTPDDTPLSSNDAA) are disordered. The stretch at 19-96 (SSNDAAELEQ…LREEVDRLGQ (78 aa)) forms a coiled coil. 296 to 301 (GCGKTL) contacts ATP. The segment at 608 to 609 (YL) is docks into pockets in the proteasome alpha-ring.

The protein belongs to the AAA ATPase family. As to quaternary structure, homohexamer. Assembles into a hexameric ring structure that caps the 20S proteasome core. Strongly interacts with the prokaryotic ubiquitin-like protein Pup through a hydrophobic interface; the interacting region of ARC lies in its N-terminal coiled-coil domain. There is one Pup binding site per ARC hexamer ring. Upon ATP-binding, the C-terminus of ARC interacts with the alpha-rings of the proteasome core, possibly by binding to the intersubunit pockets.

It functions in the pathway protein degradation; proteasomal Pup-dependent pathway. In terms of biological role, ATPase which is responsible for recognizing, binding, unfolding and translocation of pupylated proteins into the bacterial 20S proteasome core particle. May be essential for opening the gate of the 20S proteasome via an interaction with its C-terminus, thereby allowing substrate entry and access to the site of proteolysis. Thus, the C-termini of the proteasomal ATPase may function like a 'key in a lock' to induce gate opening and therefore regulate proteolysis. In Mycobacterium ulcerans (strain Agy99), this protein is Proteasome-associated ATPase.